Consider the following 550-residue polypeptide: Hydroxylamine reductase (550 aa).

Residues Cys7, Cys10, Cys19, and Cys25 each contribute to the [4Fe-4S] cluster site. Hybrid [4Fe-2O-2S] cluster-binding residues include His244, Glu268, Cys312, Cys405, Cys433, Cys458, Glu493, and Lys495. At Cys405 the chain carries Cysteine persulfide.

Belongs to the HCP family. [4Fe-4S] cluster is required as a cofactor. The cofactor is hybrid [4Fe-2O-2S] cluster.

It localises to the cytoplasm. It catalyses the reaction A + NH4(+) + H2O = hydroxylamine + AH2 + H(+). In terms of biological role, catalyzes the reduction of hydroxylamine to form NH(3) and H(2)O. The chain is Hydroxylamine reductase from Porphyromonas gingivalis (strain ATCC BAA-308 / W83).